We begin with the raw amino-acid sequence, 1577 residues long: High molecular weight form of myosin-1 (1577 aa).

The region spanning 75 to 751 (KSVDDLVQMD…EQRGLELQRN (677 aa)) is the Myosin motor domain. Residue lysine 119 is modified to N6,N6,N6-trimethyllysine. 168–175 (GESGAGKT) serves as a coordination point for ATP. Actin-binding regions lie at residues 628 to 650 (LDSL…KPNS) and 730 to 744 (QVGK…PEQR). The 28-residue stretch at 755–782 (ERVTIQIQAGVRRMFARRLYKRMRAIKP) folds into the IQ domain. One can recognise a MyTH4 domain in the interval 1261–1401 (WTKSPIPTSL…PNVEQILAAK (141 aa)). Disordered stretches follow at residues 1442-1466 (SRPA…QQAA) and 1483-1516 (QQQQ…LPAE). Low complexity-rich tracts occupy residues 1444-1466 (PAQA…QQAA) and 1483-1497 (QQQQ…QQQA). The SH3 domain maps to 1519–1577 (EEYKQVEVVYDYDGGGDAQRLVLVKGAIITVIKEYEGWAYGSTDDGQVGLYPINYTRPI).

The protein belongs to the TRAFAC class myosin-kinesin ATPase superfamily. Myosin family. As to quaternary structure, myosin I heavy chain is single-headed.

The chain is High molecular weight form of myosin-1 from Acanthamoeba castellanii (Amoeba).